A 154-amino-acid chain; its full sequence is Snaclec lebecin subunit beta (154 aa).

A signal peptide spans 1–23 (MGRIIFVSFGLLVVFLSLSGTGA). Disulfide bonds link cysteine 25-cysteine 36, cysteine 53-cysteine 150, and cysteine 125-cysteine 142. Residues 32–151 (DEEHCYYVFF…CGDDYPFVCK (120 aa)) form the C-type lectin domain. The N-linked (GlcNAc...) asparagine glycan is linked to asparagine 139.

In terms of assembly, heterodimer with the alpha subunit (AC W5XDM0); disulfide-linked. Expressed by the venom gland.

The protein localises to the secreted. In terms of biological role, inhibits human breast cancer cells (MDA-MB231) migration and proliferation, as well as their adhesion to fibrinogen and fibronectin. This inhibition may be due to the binding to receptors of the integrin family, probably alpha-v/beta-3 (ITGAV/ITGB3) (40% inhibition of cell adhesion) and alpha-5/beta-1 (ITGA5/ITGB1) (by comparison with lebectin). The protein is Snaclec lebecin subunit beta of Macrovipera lebetinus (Levantine viper).